The sequence spans 982 residues: Little elongation complex subunit 2 (982 aa).

Phosphoserine occurs at positions 17 and 326. The segment covering 410–427 has biased composition (polar residues); that stretch reads TTKVSKSPSPASTSTVPN. 2 disordered regions span residues 410-450 and 473-504; these read TTKV…PDIS and GMDGGPEECKNKDDQGFESCEKVSNSDKPLIQ. Residues 479–497 show a composition bias toward basic and acidic residues; the sequence is EECKNKDDQGFESCEKVSN. At Ser-571 the chain carries Phosphoserine. The residue at position 573 (Thr-573) is a Phosphothreonine. 3 disordered regions span residues 595–623, 672–697, and 930–982; these read VGSNLSSRPASPNSSSGQASVGNQTNTAC, ENSKQPSVSEQLSGPSDSSSWPKSGW, and PKSL…RKIT. Positions 597 to 610 are enriched in low complexity; sequence SNLSSRPASPNSSS. 2 stretches are compositionally biased toward polar residues: residues 611–623 and 672–683; these read GQASVGNQTNTAC and ENSKQPSVSEQL. Residues 684–697 are compositionally biased toward low complexity; sequence SGPSDSSSWPKSGW. Over residues 956 to 970 the composition is skewed to polar residues; it reads SMETKSSCLPAQQVE.

It belongs to the ICE2 family. In terms of assembly, component of the little elongation complex (LEC), at least composed of ELL (ELL, ELL2 or ELL3), ZC3H8, ICE1 and ICE2. Interacts with ICE1 (via C-terminus domain). Interacts with ELL. Expressed at low levels in lung and testis.

Its subcellular location is the nucleus. Its function is as follows. Component of the little elongation complex (LEC), a complex required to regulate small nuclear RNA (snRNA) gene transcription by RNA polymerase II and III. The chain is Little elongation complex subunit 2 (ICE2) from Homo sapiens (Human).